Consider the following 279-residue polypeptide: Inorganic pyrophosphatase (279 aa).

A diphosphate-binding site is contributed by Arg100. Mg(2+) is bound by residues Asp132, Asp137, and Asp169.

It belongs to the PPase family. The cofactor is Mg(2+).

It carries out the reaction diphosphate + H2O = 2 phosphate + H(+). The chain is Inorganic pyrophosphatase (ppa1) from Dictyostelium discoideum (Social amoeba).